Reading from the N-terminus, the 573-residue chain is DNA polymerase lambda (573 aa).

The 97-residue stretch at 35–131 folds into the BRCT domain; the sequence is DARGWLSSLR…KLTDTDGFSL (97 aa). The disordered stretch occupies residues 126–235; it reads TDGFSLSSPK…GPDPAPEALG (110 aa). Polar residues predominate over residues 127–149; sequence DGFSLSSPKRSLNEPQPSKSGQD. A DNA-binding region spans residues 263-277; that stretch reads KAYNVQGDKWRALGY. K310 acts as the Schiff-base intermediate with DNA in catalysis. The interval 343–346 is DNA-binding; the sequence is GTKT. DCTP is bound by residues R384, 415-418, and 424-427; these read SFRR and GDVD. Positions 418–427 are involved in primer binding; that stretch reads RGKVTCGDVD. D425, D427, and D488 together coordinate Mn(2+). A DNA-binding region spans residues 464 to 503; the sequence is ENGQQQKYLGVCRLPGAGQRHRRLDIIVVPYSEFACALLY. Residue N511 participates in dCTP binding.

Belongs to the DNA polymerase type-X family. Interacts with PCNA. Interacts with PAXX; promoting POLL recruitment to double-strand breaks (DSBs) and stimulation of the end-filling activity of POLL. Interacts with XRCC4; promoting POLL recruitment to double-strand breaks (DSBs) and stimulation of the end-filling activity of POLL. Interacts with NHEJ1/XLF; promoting POLL recruitment to double-strand breaks (DSBs) and stimulation of the end-filling activity of POLL. Mn(2+) is required as a cofactor.

It is found in the nucleus. The enzyme catalyses DNA(n) + a 2'-deoxyribonucleoside 5'-triphosphate = DNA(n+1) + diphosphate. Functionally, DNA polymerase that functions in several pathways of DNA repair. Involved in base excision repair (BER) responsible for repair of lesions that give rise to abasic (AP) sites in DNA. Also contributes to DNA double-strand break repair by non-homologous end joining and homologous recombination. Has both template-dependent and template-independent (terminal transferase) DNA polymerase activities. Also has a 5'-deoxyribose-5-phosphate lyase (dRP lyase) activity. This chain is DNA polymerase lambda, found in Rattus norvegicus (Rat).